Consider the following 892-residue polypeptide: MTDVTLKALAAERQVSVDRLVQQFADAGIRKSADDSVSAQEKQTLLAHLNREAVSGPDKLTLQRKTRSTLNIPGTGGKSKSVQIEVRKKRTFVKRDPQEAERLAAEEQAQREAEEQARREAEEQAKREAQQKAEREAAEQAKREAAEKAKREAAEKDKVSNQQTDDMTKTAQAEKARRENEAAELKRKAEEEARRKLEEEARRVAEEARRMAEENKWTATPEPVEDTSDYHVTTSQHARQAEDENDREVEGGRGRGRNAKAARPAKKGKHAESKADREEARAAVRCGKGGKRKGSSLQQGFQKPAQAVNRDVVIGETITVGELANKMAVKGSQVIKAMMKLGAMATINQVIDQETAQLVAEEMGHKVILRRENELEEAVMSDRDTGAAAEPRAPVVTIMGHVDHGKTSLLDYIRSTKVASGEAGGITQHIGAYHVETDNGMITFLDTPGHAAFTSMRARGAQATDIVVLVVAADDGVMPQTIEAIQHAKAAGVPVVVAVNKIDKPEADPDRVKNELSQYGILPEEWGGESQFVHVSAKAGTGIDELLDAILLQAEVLELKAVRKGMASGAVIESFLDKGRGPVATVLVREGTLHKGDIVLCGFEYGRVRAMRNELGQEVLEAGPSIPVEILGLSGVPAAGDEVTVVRDEKKAREVALYRQGKFREVKLARQQKSKLENMFANMTEGEVHEVNIVLKADVQGSVEAISDSLLKLSTDEVKVKIIGSGVGGITETDATLAAASNAILVGFNVRADASARKVIESESLDLRYYSVIYNLIDEVKAAMSGMLSPELKQQIIGLAEVRDVFKSPKFGAIAGCMVTEGTIKRHNPIRVLRDNVVIYEGELESLRRFKDDVNEVRNGMECGIGVKNYNDVRVGDMIEVFEIIEIQRTIA.

The disordered stretch occupies residues 88 to 304 (KKRTFVKRDP…SSLQQGFQKP (217 aa)). Basic and acidic residues-rich tracts occupy residues 93–159 (VKRD…KDKV) and 166–216 (DMTK…EENK). A compositionally biased stretch (basic residues) spans 254-269 (GRGRNAKAARPAKKGK). A compositionally biased stretch (basic and acidic residues) spans 270–282 (HAESKADREEARA). The tr-type G domain maps to 391–560 (PRAPVVTIMG…LLQAEVLELK (170 aa)). Residues 400 to 407 (GHVDHGKT) are G1. 400-407 (GHVDHGKT) contributes to the GTP binding site. Residues 425–429 (GITQH) are G2. The G3 stretch occupies residues 446–449 (DTPG). Residues 446–450 (DTPGH) and 500–503 (NKID) each bind GTP. The tract at residues 500 to 503 (NKID) is G4. Residues 536-538 (SAK) are G5.

The protein belongs to the TRAFAC class translation factor GTPase superfamily. Classic translation factor GTPase family. IF-2 subfamily.

The protein resides in the cytoplasm. One of the essential components for the initiation of protein synthesis. Protects formylmethionyl-tRNA from spontaneous hydrolysis and promotes its binding to the 30S ribosomal subunits. Also involved in the hydrolysis of GTP during the formation of the 70S ribosomal complex. The protein is Translation initiation factor IF-2 of Salmonella choleraesuis (strain SC-B67).